The chain runs to 194 residues: CASP-like protein 4D1 (194 aa).

Over Met-1–Ser-10 the chain is Cytoplasmic. Residues Ala-11–Ala-31 form a helical membrane-spanning segment. The Extracellular portion of the chain corresponds to Ala-32–Tyr-55. The helical transmembrane segment at Val-56–Val-76 threads the bilayer. Residues Ser-77 to Ser-94 are Cytoplasmic-facing. Residues Val-95–Ala-115 form a helical membrane-spanning segment. Residues Thr-116–Tyr-161 are Extracellular-facing. Residues Ala-162–Val-182 traverse the membrane as a helical segment. Residues Tyr-183–Ile-194 are Cytoplasmic-facing.

Belongs to the Casparian strip membrane proteins (CASP) family. Homodimer and heterodimers.

It localises to the cell membrane. This is CASP-like protein 4D1 from Sorghum bicolor (Sorghum).